The sequence spans 72 residues: ATP synthase subunit c (72 aa).

2 helical membrane-spanning segments follow: residues 1 to 21 (MSLGVIAAAIAIGLSALGAGI) and 49 to 69 (FIGVALVEALPIIGVVIAFIV).

Belongs to the ATPase C chain family. F-type ATPases have 2 components, F(1) - the catalytic core - and F(0) - the membrane proton channel. F(1) has five subunits: alpha(3), beta(3), gamma(1), delta(1), epsilon(1). F(0) has three main subunits: a(1), b(2) and c(10-14). The alpha and beta chains form an alternating ring which encloses part of the gamma chain. F(1) is attached to F(0) by a central stalk formed by the gamma and epsilon chains, while a peripheral stalk is formed by the delta and b chains.

The protein resides in the cell membrane. Its function is as follows. F(1)F(0) ATP synthase produces ATP from ADP in the presence of a proton or sodium gradient. F-type ATPases consist of two structural domains, F(1) containing the extramembraneous catalytic core and F(0) containing the membrane proton channel, linked together by a central stalk and a peripheral stalk. During catalysis, ATP synthesis in the catalytic domain of F(1) is coupled via a rotary mechanism of the central stalk subunits to proton translocation. Functionally, key component of the F(0) channel; it plays a direct role in translocation across the membrane. A homomeric c-ring of between 10-14 subunits forms the central stalk rotor element with the F(1) delta and epsilon subunits. The protein is ATP synthase subunit c of Bacillus cytotoxicus (strain DSM 22905 / CIP 110041 / 391-98 / NVH 391-98).